Reading from the N-terminus, the 204-residue chain is Superoxide dismutase [Mn] (204 aa).

Mn(2+)-binding residues include His-29, His-84, Asp-167, and His-171.

The protein belongs to the iron/manganese superoxide dismutase family. As to quaternary structure, homotetramer. Requires Mn(2+) as cofactor.

It carries out the reaction 2 superoxide + 2 H(+) = H2O2 + O2. Its function is as follows. Destroys superoxide anion radicals which are normally produced within the cells and which are toxic to biological systems. In Thermus aquaticus, this protein is Superoxide dismutase [Mn] (sodA).